Reading from the N-terminus, the 453-residue chain is Cytochrome b-c1 complex subunit 2, mitochondrial (453 aa).

Residues 1–14 (MKLLTRAGSLSRFY) constitute a mitochondrion transit peptide. Residues Lys66, Lys199, and Lys250 each carry the N6-acetyllysine modification.

This sequence belongs to the peptidase M16 family. UQCRC2/QCR2 subfamily. Component of the ubiquinol-cytochrome c oxidoreductase (cytochrome b-c1 complex, complex III, CIII), a multisubunit enzyme composed of 11 subunits. The complex is composed of 3 respiratory subunits cytochrome b, cytochrome c1 and Rieske protein UQCRFS1, 2 core protein subunits UQCRC1/QCR1 and UQCRC2/QCR2, and 6 low-molecular weight protein subunits UQCRH/QCR6, UQCRB/QCR7, UQCRQ/QCR8, UQCR10/QCR9, UQCR11/QCR10 and subunit 9, the cleavage product of Rieske protein UQCRFS1. The complex exists as an obligatory dimer and forms supercomplexes (SCs) in the inner mitochondrial membrane with NADH-ubiquinone oxidoreductase (complex I, CI) and cytochrome c oxidase (complex IV, CIV), resulting in different assemblies (supercomplex SCI(1)III(2)IV(1) and megacomplex MCI(2)III(2)IV(2)). Interacts with RAB5IF. Interacts with STMP1.

The protein resides in the mitochondrion inner membrane. Functionally, component of the ubiquinol-cytochrome c oxidoreductase, a multisubunit transmembrane complex that is part of the mitochondrial electron transport chain which drives oxidative phosphorylation. The respiratory chain contains 3 multisubunit complexes succinate dehydrogenase (complex II, CII), ubiquinol-cytochrome c oxidoreductase (cytochrome b-c1 complex, complex III, CIII) and cytochrome c oxidase (complex IV, CIV), that cooperate to transfer electrons derived from NADH and succinate to molecular oxygen, creating an electrochemical gradient over the inner membrane that drives transmembrane transport and the ATP synthase. The cytochrome b-c1 complex catalyzes electron transfer from ubiquinol to cytochrome c, linking this redox reaction to translocation of protons across the mitochondrial inner membrane, with protons being carried across the membrane as hydrogens on the quinol. In the process called Q cycle, 2 protons are consumed from the matrix, 4 protons are released into the intermembrane space and 2 electrons are passed to cytochrome c. The 2 core subunits UQCRC1/QCR1 and UQCRC2/QCR2 are homologous to the 2 mitochondrial-processing peptidase (MPP) subunits beta-MPP and alpha-MPP respectively, and they seem to have preserved their MPP processing properties. May be involved in the in situ processing of UQCRFS1 into the mature Rieske protein and its mitochondrial targeting sequence (MTS)/subunit 9 when incorporated into complex III. This chain is Cytochrome b-c1 complex subunit 2, mitochondrial (UQCRC2), found in Bos taurus (Bovine).